A 637-amino-acid polypeptide reads, in one-letter code: tRNA uridine 5-carboxymethylaminomethyl modification enzyme MnmG (637 aa).

FAD is bound by residues 15-20 (GAGHAG), V127, and S182. 274–288 (GPRYCPSIEDKVVRF) lines the NAD(+) pocket. Position 371 (Q371) interacts with FAD.

The protein belongs to the MnmG family. Homodimer. Heterotetramer of two MnmE and two MnmG subunits. FAD is required as a cofactor.

The protein localises to the cytoplasm. NAD-binding protein involved in the addition of a carboxymethylaminomethyl (cmnm) group at the wobble position (U34) of certain tRNAs, forming tRNA-cmnm(5)s(2)U34. In Heliobacterium modesticaldum (strain ATCC 51547 / Ice1), this protein is tRNA uridine 5-carboxymethylaminomethyl modification enzyme MnmG.